The chain runs to 282 residues: Purine nucleoside phosphorylase (282 aa).

Residues Ser-46, His-78, and 103–105 contribute to the phosphate site; that span reads RTH. Glu-204 is a catalytic residue. Residue Glu-204 participates in a purine D-ribonucleoside binding. Ser-223 serves as a coordination point for phosphate. Asn-246 provides a ligand contact to a purine D-ribonucleoside.

Belongs to the PNP/MTAP phosphorylase family. Homotrimer.

The enzyme catalyses a purine 2'-deoxy-D-ribonucleoside + phosphate = a purine nucleobase + 2-deoxy-alpha-D-ribose 1-phosphate. Its pathway is purine metabolism; purine nucleoside salvage. Functionally, the purine nucleoside phosphorylases catalyze the phosphorolytic breakdown of the N-glycosidic bond in the beta-(deoxy)ribonucleoside molecules, with the formation of the corresponding free purine bases and pentose-1-phosphate. Cleaves guanosine, inosine, 2'-deoxyguanosine and 2'-deoxyinosine. The sequence is that of Purine nucleoside phosphorylase (punA) from Cellulomonas sp.